Reading from the N-terminus, the 96-residue chain is Co-chaperonin GroES (96 aa).

The protein belongs to the GroES chaperonin family. In terms of assembly, heptamer of 7 subunits arranged in a ring. Interacts with the chaperonin GroEL.

The protein localises to the cytoplasm. Together with the chaperonin GroEL, plays an essential role in assisting protein folding. The GroEL-GroES system forms a nano-cage that allows encapsulation of the non-native substrate proteins and provides a physical environment optimized to promote and accelerate protein folding. GroES binds to the apical surface of the GroEL ring, thereby capping the opening of the GroEL channel. The chain is Co-chaperonin GroES from Leptospira borgpetersenii serovar Hardjo-bovis (strain JB197).